The sequence spans 101 residues: Ascorbate-specific PTS system EIIB component (101 aa).

The region spanning 1 to 100 is the PTS EIIB type-2 domain; sequence MTVRILAVCG…VIKEHFPQDV (100 aa). Residue Cys-9 is the Phosphocysteine intermediate of the active site. Position 9 is a phosphocysteine (Cys-9).

It localises to the cytoplasm. It carries out the reaction N(pros)-phospho-L-histidyl-[protein] + L-ascorbate(out) = L-ascorbate 6-phosphate(in) + L-histidyl-[protein]. Functionally, the phosphoenolpyruvate-dependent sugar phosphotransferase system (sugar PTS), a major carbohydrate active transport system, catalyzes the phosphorylation of incoming sugar substrates concomitantly with their translocation across the cell membrane. The enzyme II UlaABC PTS system is involved in ascorbate transport. This Escherichia coli O157:H7 protein is Ascorbate-specific PTS system EIIB component (ulaB).